The chain runs to 353 residues: Endophilin-A1 (353 aa).

Residues 1-21 (MSVAGLKKQFHKATQKVSEKV) form a membrane-binding amphipathic helix region. Residues 1 to 27 (MSVAGLKKQFHKATQKVSEKVGGAEGT) are disordered. Residues 1 to 125 (MSVAGLKKQF…DVGEAMKELS (125 aa)) are binds and tubulates liposomes. Residues 18 to 249 (SEKVGGAEGT…LEDRIKEASS (232 aa)) form the BAR domain. Residues 60-87 (PNPASRAKLSMINTMSKIRGQEKGPGYP) are required for dimerization upon membrane association. Residues 181–201 (EELRQALEKFDESKEIAESSM) are a coiled coil. Basic and acidic residues predominate over residues 243–257 (RIKEASSQPKREYQP). Residues 243–290 (RIKEASSQPKREYQPKPRMSLDFTSGGDNTQHNGGISHATTPKPAGAH) form a disordered region. Residues 264–282 (DFTSGGDNTQHNGGISHAT) show a composition bias toward polar residues. In terms of domain architecture, SH3 spans 291–350 (MDQPCCRALYDFEPENEGELGFKEGDIITLTNQIDENWYEGMLHGQSGFFPINYVDILVP).

Belongs to the endophilin family. In terms of assembly, monomer; in cytoplasm. Homodimer; when associated with membranes. Associates with MAP4K3. This interaction appears to regulate MAP4K3-mediated JNK activation. Interacts with SYNJ1 and DNM1. In terms of tissue distribution, highly expressed in brain.

It localises to the cytoplasm. The protein resides in the membrane. Its subcellular location is the early endosome. It is found in the presynapse. In terms of biological role, implicated in synaptic vesicle endocytosis. May recruit other proteins to membranes with high curvature. In Gallus gallus (Chicken), this protein is Endophilin-A1.